Consider the following 235-residue polypeptide: Orotidine 5'-phosphate decarboxylase (235 aa).

Substrate-binding positions include aspartate 9, lysine 31, 58–67 (DLKFHDIPNT), threonine 121, arginine 180, glutamine 190, glycine 210, and arginine 211. The Proton donor role is filled by lysine 60.

The protein belongs to the OMP decarboxylase family. Type 1 subfamily. As to quaternary structure, homodimer.

It catalyses the reaction orotidine 5'-phosphate + H(+) = UMP + CO2. It participates in pyrimidine metabolism; UMP biosynthesis via de novo pathway; UMP from orotate: step 2/2. In terms of biological role, catalyzes the decarboxylation of orotidine 5'-monophosphate (OMP) to uridine 5'-monophosphate (UMP). The chain is Orotidine 5'-phosphate decarboxylase from Nitratidesulfovibrio vulgaris (strain ATCC 29579 / DSM 644 / CCUG 34227 / NCIMB 8303 / VKM B-1760 / Hildenborough) (Desulfovibrio vulgaris).